Consider the following 195-residue polypeptide: Imidazoleglycerol-phosphate dehydratase (195 aa).

The protein belongs to the imidazoleglycerol-phosphate dehydratase family.

The protein resides in the cytoplasm. It catalyses the reaction D-erythro-1-(imidazol-4-yl)glycerol 3-phosphate = 3-(imidazol-4-yl)-2-oxopropyl phosphate + H2O. The protein operates within amino-acid biosynthesis; L-histidine biosynthesis; L-histidine from 5-phospho-alpha-D-ribose 1-diphosphate: step 6/9. This is Imidazoleglycerol-phosphate dehydratase from Deinococcus deserti (strain DSM 17065 / CIP 109153 / LMG 22923 / VCD115).